The chain runs to 590 residues: TPR repeat-containing protein PA4667 (590 aa).

5 TPR repeats span residues 235-268, 269-302, 370-403, 405-438, and 508-541; these read VAPL…HPDD, KRVR…FPDD, LPAQ…QPDY, IQLY…YPED, and PAIL…YPDH.

In Pseudomonas aeruginosa (strain ATCC 15692 / DSM 22644 / CIP 104116 / JCM 14847 / LMG 12228 / 1C / PRS 101 / PAO1), this protein is TPR repeat-containing protein PA4667.